The primary structure comprises 308 residues: MQPSGHRLRDIEHHPLLTDNDNYDSASSSSSEADMADRVWFIRDGCGMVCAVMTWLLVVYADFVVTFVMLLPSKDFWYSVVNGVLFNCLAVLALSSHLRTMLTDPGAVPKGNATKEYMESLQLKPGEVIYKCPKCCCIKPERAHHCSICKRCIRKMDHHCPWVNNCVGEKNQRFFVLFTMYIALSSIHALILCGLQFISCVRGQWTECSDFSPPITVILLVFLCLEGLLFFTFTAVMFGTQIHSICNDETEIERLKSEKPTWERRLRWEGMKSVFGGPPSLLWMNPFVGFRFRRLQMRTRKGGPEFSV.

Topologically, residues 1–50 (MQPSGHRLRDIEHHPLLTDNDNYDSASSSSSEADMADRVWFIRDGCGMVC) are cytoplasmic. Residues 51–71 (AVMTWLLVVYADFVVTFVMLL) form a helical membrane-spanning segment. At 72-75 (PSKD) the chain is on the lumenal side. A helical transmembrane segment spans residues 76-96 (FWYSVVNGVLFNCLAVLALSS). The Cytoplasmic portion of the chain corresponds to 97–173 (HLRTMLTDPG…NNCVGEKNQR (77 aa)). The DHHC domain maps to 130-180 (YKCPKCCCIKPERAHHCSICKRCIRKMDHHCPWVNNCVGEKNQRFFVLFTM). The active-site S-palmitoyl cysteine intermediate is Cys-160. The chain crosses the membrane as a helical span at residues 174-194 (FFVLFTMYIALSSIHALILCG). The Lumenal segment spans residues 195–217 (LQFISCVRGQWTECSDFSPPITV). A helical transmembrane segment spans residues 218–238 (ILLVFLCLEGLLFFTFTAVMF). Residues 239-308 (GTQIHSICND…TRKGGPEFSV (70 aa)) are Cytoplasmic-facing.

Belongs to the DHHC palmitoyltransferase family. Homooligomers. Heterooligomers with ZDHHC3. In terms of processing, autopalmitoylated. Widely expressed. Present in Sertoli cells (at protein level).

It is found in the golgi apparatus membrane. The catalysed reaction is L-cysteinyl-[protein] + hexadecanoyl-CoA = S-hexadecanoyl-L-cysteinyl-[protein] + CoA. It carries out the reaction L-cysteinyl-[protein] + tetradecanoyl-CoA = S-tetradecanoyl-L-cysteinyl-[protein] + CoA. It catalyses the reaction L-cysteinyl-[protein] + octadecanoyl-CoA = S-octadecanoyl-L-cysteinyl-[protein] + CoA. Its function is as follows. Golgi-localized palmitoyltransferase that catalyzes the addition of palmitate onto various protein substrates and therefore functions in several unrelated biological processes. Has no stringent fatty acid selectivity and in addition to palmitate can also transfer onto target proteins myristate from tetradecanoyl-CoA and stearate from octadecanoyl-CoA. Palmitoylates sex steroid hormone receptors, including ESR1, PGR and AR, thereby regulating their targeting to the plasma membrane and their function in rapid intracellular signaling upon binding of sex hormones. Palmitoylates GNAQ, a heterotrimeric G protein, regulating its dynamic localization at the plasma membrane and is thereby involved in GNAQ-dependent G protein-coupled receptor signaling pathways. Also functions in ligand-induced cell death by regulating the FAS signaling pathway through the palmitoylation and stabilization of the receptor at the plasma membrane. In epithelial cells, palmitoylates SCRIB and regulates its localization to the plasma membrane, regulating indirectly cell polarity and differentiation. Also palmitoylates JAM3 and promotes its expression at tight junctions and regulates its function in cell migration. Palmitoylates the glucose transporter GLUT4/SLC2A4 and controls the insulin-dependent translocation of GLUT4 to the plasma membrane. In brain, could also palmitoylate SNAP25 and DLG4/PSD95. Could also palmitoylate DNAJC5 and regulate its localization to the Golgi membrane. Could also palmitoylate NCDN. May play a role in follicle stimulation hormone (FSH) activation of testicular Sertoli cells. Activates pyroptosis by catalyzing palmitoylation of gasdermin-D (GSDMD). This is Palmitoyltransferase ZDHHC7 from Rattus norvegicus (Rat).